A 418-amino-acid chain; its full sequence is Serine protease inhibitor A3M (418 aa).

The N-terminal stretch at 1–20 (MAFIAALGILMAGICPTVLC) is a signal peptide. N-linked (GlcNAc...) asparagine glycosylation is found at Asn104, Asn184, and Asn269. An RCL region spans residues 367 to 392 (GTEAAAATGFIFGFRSRRLQTMTVQF).

It belongs to the serpin family. In terms of tissue distribution, expressed in liver and testis.

It localises to the secreted. This Mus musculus (Mouse) protein is Serine protease inhibitor A3M (Serpina3m).